Reading from the N-terminus, the 283-residue chain is Flagellar filament 35 kDa core protein (283 aa).

The protein belongs to the bacterial flagellin family. As to quaternary structure, the flagellum consists of two outer layers around a core that contains several antigenically related polypeptides.

The protein resides in the periplasmic flagellum. It localises to the periplasm. Functionally, component of the core of the flagella. The protein is Flagellar filament 35 kDa core protein (flaB) of Leptospira interrogans serogroup Icterohaemorrhagiae serovar copenhageni (strain Fiocruz L1-130).